Consider the following 303-residue polypeptide: MANYEFSQVSEDRPGCRLTRKAQIGLGVGLLLLVALVVVVVIVLWPRSPLVWKGKPTTKHFADIILGRCLIYTQILRPEMRDQDCKKILSTFKRGFISKNPCNITNEDYAPLVKLVTQTIPCNKTLFWSKSKHLAHQYTWIQGKMFTLEDTLLGYIADDLRWCGDPSTSDMNYDSCPHWSENCPNNPVAVFWNVISQKFAEDACGVVQVMLNGSLSEPFYRNSTFGSVEVFNLDPNKVHKLQAWVMHDIKGTSSNACSSPSINELKSIVNKRNMIFACQDNYRPVRFLQCVKNPEHPSCRLNV.

Residues M1–K21 lie on the Cytoplasmic side of the membrane. The helical; Signal-anchor for type II membrane protein transmembrane segment at A22–L44 threads the bilayer. The Extracellular segment spans residues W45 to V303. 3 cysteine pairs are disulfide-bonded: C69–C85, C102–C183, and C163–C176. N103 carries an N-linked (GlcNAc...) asparagine glycan. Residue C122 is part of the active site. N123 is a glycosylation site (N-linked (GlcNAc...) asparagine). C204 is an active-site residue. 2 N-linked (GlcNAc...) asparagine glycosylation sites follow: N212 and N222. Cystine bridges form between C257–C278 and C290–C299.

It belongs to the ADP-ribosyl cyclase family. Homodimer. In terms of tissue distribution, spleen, liver, heart, thymus, thyroid gland, ileum, colon, cerebellum, salivary gland, adrenal gland, jejunum, islets of Langerhans and osteoclasts.

It is found in the cell membrane. It catalyses the reaction NAD(+) = cyclic ADP-beta-D-ribose + nicotinamide + H(+). The enzyme catalyses nicotinate + NADP(+) = nicotinate-adenine dinucleotide phosphate + nicotinamide. It carries out the reaction NAD(+) + H2O = ADP-D-ribose + nicotinamide + H(+). With respect to regulation, both NAADP and cADPR synthesis are inhibited by nicotinic acid. Its function is as follows. Synthesizes the second messengers cyclic ADP-ribose and nicotinate-adenine dinucleotide phosphate, the former a second messenger for glucose-induced insulin secretion, the latter a Ca(2+) mobilizer. Also has cADPR hydrolase activity. Functionally, regulates osteoclastic bone resorption, probably via production of cyclic ADP-ribose and triggering of a cytosolic calcium ion signal through ryanodine receptor activation. In Rattus norvegicus (Rat), this protein is ADP-ribosyl cyclase/cyclic ADP-ribose hydrolase 1 (Cd38).